A 180-amino-acid polypeptide reads, in one-letter code: Ribulose bisphosphate carboxylase small subunit, chloroplastic (180 aa).

The N-terminal 57 residues, 1-57 (MVSSMMVSSAATFTRASPAQSSMVAPFTGLKSASAFPVTRKPNADLSHLPSNGGRVQ), are a transit peptide targeting the chloroplast.

This sequence belongs to the RuBisCO small chain family. In terms of assembly, heterohexadecamer of 8 large and 8 small subunits.

It localises to the plastid. The protein resides in the chloroplast. Its function is as follows. RuBisCO catalyzes two reactions: the carboxylation of D-ribulose 1,5-bisphosphate, the primary event in carbon dioxide fixation, as well as the oxidative fragmentation of the pentose substrate. Both reactions occur simultaneously and in competition at the same active site. Although the small subunit is not catalytic it is essential for maximal activity. The sequence is that of Ribulose bisphosphate carboxylase small subunit, chloroplastic from Musa acuminata (Banana).